A 308-amino-acid chain; its full sequence is Transaldolase (308 aa).

The active-site Schiff-base intermediate with substrate is the Lys125.

This sequence belongs to the transaldolase family. Type 1 subfamily. As to quaternary structure, homodimer.

The protein resides in the cytoplasm. The enzyme catalyses D-sedoheptulose 7-phosphate + D-glyceraldehyde 3-phosphate = D-erythrose 4-phosphate + beta-D-fructose 6-phosphate. Its pathway is carbohydrate degradation; pentose phosphate pathway; D-glyceraldehyde 3-phosphate and beta-D-fructose 6-phosphate from D-ribose 5-phosphate and D-xylulose 5-phosphate (non-oxidative stage): step 2/3. Functionally, transaldolase is important for the balance of metabolites in the pentose-phosphate pathway. The polypeptide is Transaldolase (Pseudomonas fluorescens (strain ATCC BAA-477 / NRRL B-23932 / Pf-5)).